A 293-amino-acid polypeptide reads, in one-letter code: Probable 2-(5''-triphosphoribosyl)-3'-dephosphocoenzyme-A synthase (293 aa).

This sequence belongs to the CitG/MdcB family.

It carries out the reaction 3'-dephospho-CoA + ATP = 2'-(5''-triphospho-alpha-D-ribosyl)-3'-dephospho-CoA + adenine. Functionally, involved in the formation of 2-(5''-phosphoribosyl)-3'-dephosphocoenzyme-A, the prosthetic group of the acyl-carrier protein of the malonate decarboxylase. This chain is Probable 2-(5''-triphosphoribosyl)-3'-dephosphocoenzyme-A synthase, found in Pseudomonas paraeruginosa (strain DSM 24068 / PA7) (Pseudomonas aeruginosa (strain PA7)).